The primary structure comprises 400 residues: MAKQKFERTKPHVNIGTIGHVDHGKTTLTAAITMVLATVGKAQVKKYDEIDNAPEERERGITINTAHVEYETEKRHYAHVDCPGHADYVKNMITGAAQMDGAILVVSAADGPMPQTREHILLARQVGVPYIVVYLNKADMVDDPELLELVDMEVRELLSTYEFPGDEIPIITGSALKAMECACGKRECEWCKSIWELMDAVDEYIPTPQRAVDKPFLMPVEDVFSITGRGTVATGRIERGQVKVGDEVEIVGLQDKPRKTVVTGVEMFRKILDVGVAGDNVGCLLRGVDRKEIERGQVLAKPGSIKPHKSFSAEVYVLTKEEGGRHTPFFNGYRPQFYFRTTDVTGVVKLPEGVEMVMPGDNVRIDIDLITPIAIEEGLRFAIREGGRTVGAGVVTGIRE.

In terms of domain architecture, tr-type G spans Lys-10–Gln-209. Positions Gly-19–Thr-26 are G1. Gly-19–Thr-26 is a binding site for GTP. Mg(2+) is bound at residue Thr-26. The segment at Gly-60–Asn-64 is G2. Residues Asp-81–Gly-84 are G3. Residues Asp-81–His-85 and Asn-136–Asp-139 contribute to the GTP site. Positions Asn-136–Asp-139 are G4. A G5 region spans residues Ser-174–Leu-176.

Belongs to the TRAFAC class translation factor GTPase superfamily. Classic translation factor GTPase family. EF-Tu/EF-1A subfamily. As to quaternary structure, monomer.

The protein resides in the cytoplasm. It catalyses the reaction GTP + H2O = GDP + phosphate + H(+). Functionally, GTP hydrolase that promotes the GTP-dependent binding of aminoacyl-tRNA to the A-site of ribosomes during protein biosynthesis. This Pelotomaculum thermopropionicum (strain DSM 13744 / JCM 10971 / SI) protein is Elongation factor Tu 1.